Reading from the N-terminus, the 538-residue chain is Bifunctional purine biosynthesis protein PurH (538 aa).

Positions 11 to 158 constitute an MGS-like domain; that stretch reads PDLHRVRRAL…KNHAYTGVVT (148 aa).

This sequence belongs to the PurH family.

It carries out the reaction (6R)-10-formyltetrahydrofolate + 5-amino-1-(5-phospho-beta-D-ribosyl)imidazole-4-carboxamide = 5-formamido-1-(5-phospho-D-ribosyl)imidazole-4-carboxamide + (6S)-5,6,7,8-tetrahydrofolate. The catalysed reaction is IMP + H2O = 5-formamido-1-(5-phospho-D-ribosyl)imidazole-4-carboxamide. It participates in purine metabolism; IMP biosynthesis via de novo pathway; 5-formamido-1-(5-phospho-D-ribosyl)imidazole-4-carboxamide from 5-amino-1-(5-phospho-D-ribosyl)imidazole-4-carboxamide (10-formyl THF route): step 1/1. The protein operates within purine metabolism; IMP biosynthesis via de novo pathway; IMP from 5-formamido-1-(5-phospho-D-ribosyl)imidazole-4-carboxamide: step 1/1. This is Bifunctional purine biosynthesis protein PurH from Bartonella bacilliformis (strain ATCC 35685 / KC583 / Herrer 020/F12,63).